A 295-amino-acid polypeptide reads, in one-letter code: uncharacterized protein (295 aa).

It localises to the plastid. Its subcellular location is the chloroplast. This is an uncharacterized protein from Euglena gracilis.